Here is a 273-residue protein sequence, read N- to C-terminus: Programmed cell death 1 ligand 2 (273 aa).

A signal peptide spans 1-19 (MIFLLLMLSLELQLHQIAA). The Extracellular portion of the chain corresponds to 20-220 (LFTVTVPKEL…SQMEPRTHPT (201 aa)). The Ig-like V-type domain maps to 21–118 (FTVTVPKELY…AWDYKYLTLK (98 aa)). N-linked (GlcNAc...) asparagine glycans are attached at residues asparagine 37, asparagine 64, asparagine 157, asparagine 163, and asparagine 189. Intrachain disulfides connect cysteine 42-cysteine 102 and cysteine 143-cysteine 192. The region spanning 122–203 (SYRKINTHIL…FWNTHVRELT (82 aa)) is the Ig-like C2-type domain. The helical transmembrane segment at 221-241 (WLLHIFIPFCIIAFIFIATVI) threads the bilayer. At 242–273 (ALRKQLCQKLYSSKDTTKRPVTTTKREVNSAI) the chain is on the cytoplasmic side.

This sequence belongs to the immunoglobulin superfamily. BTN/MOG family. Interacts with PDCD1. In terms of tissue distribution, highly expressed in heart, placenta, pancreas, lung and liver and weakly expressed in spleen, lymph nodes and thymus.

The protein localises to the secreted. It is found in the endomembrane system. Its subcellular location is the cell membrane. In terms of biological role, involved in the costimulatory signal, essential for T-cell proliferation and IFNG production in a PDCD1-independent manner. Interaction with PDCD1 inhibits T-cell proliferation by blocking cell cycle progression and cytokine production. This chain is Programmed cell death 1 ligand 2 (PDCD1LG2), found in Homo sapiens (Human).